We begin with the raw amino-acid sequence, 380 residues long: Cytochrome b (380 aa).

4 helical membrane passes run 34 to 54 (FGSLLGICLMTQILTGLLLAM), 78 to 99 (WLIRNLHANGASFFFICIYLHI), 114 to 134 (WNTGVILLLTLMATAFVGYVL), and 179 to 199 (FFALHFLLPFMIAGLTLVHLT). 2 residues coordinate heme b: H84 and H98. Heme b-binding residues include H183 and H197. An a ubiquinone-binding site is contributed by H202. Transmembrane regions (helical) follow at residues 227–247 (LKDILGFTLMLLPLTTLALFS), 289–309 (LGGVLALAASVLILFLAPFLH), 321–341 (LSQLLFWILVANLFILTWVGS), and 348–368 (FIIIGQLASFTYFTILLILFP).

This sequence belongs to the cytochrome b family. As to quaternary structure, the cytochrome bc1 complex contains 11 subunits: 3 respiratory subunits (MT-CYB, CYC1 and UQCRFS1), 2 core proteins (UQCRC1 and UQCRC2) and 6 low-molecular weight proteins (UQCRH/QCR6, UQCRB/QCR7, UQCRQ/QCR8, UQCR10/QCR9, UQCR11/QCR10 and a cleavage product of UQCRFS1). This cytochrome bc1 complex then forms a dimer. Heme b is required as a cofactor.

It localises to the mitochondrion inner membrane. Component of the ubiquinol-cytochrome c reductase complex (complex III or cytochrome b-c1 complex) that is part of the mitochondrial respiratory chain. The b-c1 complex mediates electron transfer from ubiquinol to cytochrome c. Contributes to the generation of a proton gradient across the mitochondrial membrane that is then used for ATP synthesis. The polypeptide is Cytochrome b (MT-CYB) (Procellaria parkinsoni (Black petrel)).